The sequence spans 363 residues: Trichothecene biosynthesis protein 14 (363 aa).

It belongs to the TRI14 family.

In terms of biological role, part of the gene cluster that mediates the production of the antimicrobial trichothecene harzianum A (HA) that plays a role in Botrytis cinerea antagonistic activity and plant defense priming. The biosynthesis of harzianum A begins with the cyclization of farnesyl diphosphate to trichodiene and is catalyzed by the trichodiene synthase TRI5. Trichodiene undergoes a series of oxygenations catalyzed by the cytochrome P450 monooxygenase TRI4. TRI4 controls the addition of 3 oxygens at C-2, C-11, and the C-12, C-13-epoxide to form the intermediate isotrichodiol. Isotrichodiol then undergoes a non-enzymatic isomerization and cyclization to form 12,13-epoxytrichothec-9-ene (EPT) which is further converted to trichodermol by the cytochrome P450 monooxygenase TRI11 via C-4 hydroxylation. The last step of HA synthesis is esterification of an octatriendioyl moiety to the C-4 oxygen of trichodermol. The octatriendioyl moiety is probably produced by the polyketide synthase TRI17 and the esterification performed by the trichothecene O-acetyltransferase TRI3. This Trichoderma arundinaceum protein is Trichothecene biosynthesis protein 14.